We begin with the raw amino-acid sequence, 542 residues long: CTP synthase (542 aa).

Residues 1 to 265 (MARYVFITGG…DDEVLAAFGI (265 aa)) form an amidoligase domain region. CTP is bound at residue serine 13. Serine 13 serves as a coordination point for UTP. ATP-binding positions include 14–19 (SLGKGI) and aspartate 71. 2 residues coordinate Mg(2+): aspartate 71 and glutamate 139. Residues 146-148 (DIE), 186-191 (KTKPTQ), and lysine 222 contribute to the CTP site. UTP-binding positions include 186 to 191 (KTKPTQ) and lysine 222. The Glutamine amidotransferase type-1 domain occupies 291-541 (TIAIVGKYTG…IEAATEQSRL (251 aa)). Glycine 353 contributes to the L-glutamine binding site. The Nucleophile; for glutamine hydrolysis role is filled by cysteine 380. L-glutamine is bound by residues 381–384 (FGMQ), glutamate 404, and arginine 469. Catalysis depends on residues histidine 514 and glutamate 516.

Belongs to the CTP synthase family. As to quaternary structure, homotetramer.

The catalysed reaction is UTP + L-glutamine + ATP + H2O = CTP + L-glutamate + ADP + phosphate + 2 H(+). It catalyses the reaction L-glutamine + H2O = L-glutamate + NH4(+). The enzyme catalyses UTP + NH4(+) + ATP = CTP + ADP + phosphate + 2 H(+). The protein operates within pyrimidine metabolism; CTP biosynthesis via de novo pathway; CTP from UDP: step 2/2. Allosterically activated by GTP, when glutamine is the substrate; GTP has no effect on the reaction when ammonia is the substrate. The allosteric effector GTP functions by stabilizing the protein conformation that binds the tetrahedral intermediate(s) formed during glutamine hydrolysis. Inhibited by the product CTP, via allosteric rather than competitive inhibition. Functionally, catalyzes the ATP-dependent amination of UTP to CTP with either L-glutamine or ammonia as the source of nitrogen. Regulates intracellular CTP levels through interactions with the four ribonucleotide triphosphates. This is CTP synthase from Rhizobium etli (strain ATCC 51251 / DSM 11541 / JCM 21823 / NBRC 15573 / CFN 42).